The following is a 122-amino-acid chain: Seripauperin-5 (122 aa).

The chain crosses the membrane as a helical span at residues 7–24 (IAAGVAAIAAGASAAATT).

The protein belongs to the SRP1/TIP1 family. Seripauperin subfamily.

The protein resides in the membrane. The chain is Seripauperin-5 (PAU5) from Saccharomyces cerevisiae (strain ATCC 204508 / S288c) (Baker's yeast).